The sequence spans 369 residues: Ubiquinone biosynthesis protein COQ4, mitochondrial (369 aa).

The transit peptide at 1–28 (MTSILGSARPLIQVGPKSRNASTSMSRL) directs the protein to the mitochondrion. A disordered region spans residues 1-70 (MTSILGSARP…NPTNASRHPR (70 aa)). 2 stretches are compositionally biased toward polar residues: residues 19–33 (RNAS…SFPT) and 47–66 (YATI…TNAS). 4 residues coordinate Zn(2+): H198, D199, H202, and E214. Residues 330-369 (FSGRAKKGGKRRGWPSKILEHQKAQHQQQQQQQKVDESRN) form a disordered region. A compositionally biased stretch (basic residues) spans 332–343 (GRAKKGGKRRGW).

This sequence belongs to the COQ4 family. In terms of assembly, component of a multi-subunit COQ enzyme complex, composed of at least COQ3, COQ4, COQ5, COQ6, COQ7 and COQ9. Requires Zn(2+) as cofactor.

It is found in the mitochondrion inner membrane. It catalyses the reaction a 4-hydroxy-3-methoxy-5-(all-trans-polyprenyl)benzoate + H(+) = a 2-methoxy-6-(all-trans-polyprenyl)phenol + CO2. The protein operates within cofactor biosynthesis; ubiquinone biosynthesis. In terms of biological role, lyase that catalyzes the C1-decarboxylation of 4-hydroxy-3-methoxy-5-(all-trans-polyprenyl)benzoic acid into 2-methoxy-6-(all-trans-polyprenyl)phenol during ubiquinone biosynthesis. In Mycosarcoma maydis (Corn smut fungus), this protein is Ubiquinone biosynthesis protein COQ4, mitochondrial.